The sequence spans 301 residues: MPINIPTHLPAKQVLESEHIFVMDESRAFHQDIRPQKIIILNLMPKKIQTETQLLRLLGNSPLQVHFTFLIPSTHTPKNTAREHLDEFYTTFSNIRHKRFDGMIITGAPIEHLAFEEVSYWEELKEIMEWSKTNVTSTLHICWGAQAGLYYHYGVEKIQMPKKIFGVFEHTVLSKHERLVRGFDELYYVPHSRHTDINMEQLQAVPELNILTASKEAGVCLIVSKDEKQVFLTGHPEYDTNTLLQEYERDLERNLSTVEAPKHYFAKGSNEPVNRWKAHATLLFMNWLNYYVYQETPYEWD.

Residue Cys142 is the Acyl-thioester intermediate of the active site. 2 residues coordinate substrate: Lys163 and Ser192. His235 functions as the Proton acceptor in the catalytic mechanism. Glu237 is a catalytic residue. A substrate-binding site is contributed by Arg249.

It belongs to the MetA family.

The protein resides in the cytoplasm. The enzyme catalyses L-homoserine + acetyl-CoA = O-acetyl-L-homoserine + CoA. It functions in the pathway amino-acid biosynthesis; L-methionine biosynthesis via de novo pathway; O-acetyl-L-homoserine from L-homoserine: step 1/1. Functionally, transfers an acetyl group from acetyl-CoA to L-homoserine, forming acetyl-L-homoserine. In Bacillus subtilis (strain 168), this protein is Homoserine O-acetyltransferase.